Consider the following 938-residue polypeptide: MSDYKSTLNLPETGFPMRGDLAKREPGMLARWTDDDLYGIIRAAKKGKKTFILHDGPPYANGSIHIGHSVNKILKDIIVKSKGLSGYDSPYVPGWDCHGLPIELKVEQEYGKPGEKFTAAEFRAKCREYAATQVDGQRKDFIRLGVLGDWSHPYLTMDFKTEANIIRALGKIIGNGHLHKGAKPVHWCVDCRSALAEAEVEYYDKTSPSIDVAFQAVDQDALKAKFAVSNVNGPISLVIWTTTPWTLPANRAISIAPDFDYALVQIDGQAVILAKDLVESVMQRIGVTDYTILGTVKGAELELLRFTHPFMGFDVPAILGDHVTLDAGTGAVHTAPGHGPDDYVIGQKYGLETANPVGPDGTYLPGTYPTLDGVNVFKANDIVVALLQEKGALLHVEKMQHSYPCCWRHKTPIIFRATPQWFVSMDQKGLRAQSLKEIKGVQWIPDWGQARIESMVANRPDWCISRQRTWGVPMSLFVHKDTEELHPRTLELMEEVAKRVEVNGIQAWWDLDAKEILGDEADQYVKVPDTLDVWFDSGSTHSSVVDVRPEFAGHAADMYLEGSDQHRGWFMSSLMISTAMKGKAPYRQVLTHGFTVDGQGRKMSKSIGNTVSPQDVMNKLGADILRLWVASTDYTGEMAVSDEILKRAADSYRRIRNTARFLLANLNGFDPAKDMVKPEEMVVLDRWAVGCAKAAQEDILKAYEAYDFHEVVQRLMRFCSVEMGSFYLDIIKDRQYTAKADSVARRSCQTALYHIAEALVRWMAPILSFTADEVWGYLPGEREKYVFTGEWYEGLFGLADSEAMNDAFWDELLKVRGEVNKVIEQARADKKVGGSLEAAVTLYAEPELAAKLTALGDELRFVLLTSGATVADYNDAPADAQQSEVLKGLKVALSKAEGEKCPRCWHYTRDVGKVAEHAEICGRCVSNVAGDGEKRKFA.

Positions Pro-58–His-68 match the 'HIGH' region motif. At Lys-183 the chain carries N6-acetyllysine. Glu-561 provides a ligand contact to L-isoleucyl-5'-AMP. Residues Lys-602–Ser-606 carry the 'KMSKS' region motif. An ATP-binding site is contributed by Lys-605. Zn(2+) is bound by residues Cys-901, Cys-904, Cys-921, and Cys-924.

It belongs to the class-I aminoacyl-tRNA synthetase family. IleS type 1 subfamily. As to quaternary structure, monomer. The cofactor is Zn(2+).

The protein localises to the cytoplasm. It carries out the reaction tRNA(Ile) + L-isoleucine + ATP = L-isoleucyl-tRNA(Ile) + AMP + diphosphate. Catalyzes the attachment of isoleucine to tRNA(Ile). As IleRS can inadvertently accommodate and process structurally similar amino acids such as valine, to avoid such errors it has two additional distinct tRNA(Ile)-dependent editing activities. One activity is designated as 'pretransfer' editing and involves the hydrolysis of activated Val-AMP. The other activity is designated 'posttransfer' editing and involves deacylation of mischarged Val-tRNA(Ile). This chain is Isoleucine--tRNA ligase, found in Escherichia coli (strain ATCC 8739 / DSM 1576 / NBRC 3972 / NCIMB 8545 / WDCM 00012 / Crooks).